A 248-amino-acid polypeptide reads, in one-letter code: NAD-dependent protein deacylase 2 (248 aa).

One can recognise a Deacetylase sirtuin-type domain in the interval 1–248; that stretch reads MLQAASALRH…HVMAELISHI (248 aa). NAD(+) contacts are provided by residues 19 to 38 and 102 to 105; these read GAGL…GGLY and QNVD. Residue His-122 is the Proton acceptor of the active site. Residues Cys-130, Cys-133, Cys-152, and Cys-155 each contribute to the Zn(2+) site. NAD(+) contacts are provided by residues 193 to 195, 219 to 221, and Ala-237; these read GTT and NPQ.

This sequence belongs to the sirtuin family. Class III subfamily. It depends on Zn(2+) as a cofactor.

It is found in the cytoplasm. The enzyme catalyses N(6)-acetyl-L-lysyl-[protein] + NAD(+) + H2O = 2''-O-acetyl-ADP-D-ribose + nicotinamide + L-lysyl-[protein]. Functionally, NAD-dependent protein deacetylase which modulates the activities of several proteins which are inactive in their acetylated form. The sequence is that of NAD-dependent protein deacylase 2 (cobB2) from Pseudomonas syringae pv. tomato (strain ATCC BAA-871 / DC3000).